The primary structure comprises 2058 residues: E3 ubiquitin-protein ligase ubr-1 (2058 aa).

Residues 93-164 (QICGHVFKNG…EGYACANHEK (72 aa)) form a UBR-type zinc finger. Residues 1107 to 1175 (VPEAAPAPEN…TPSEKSETVV (69 aa)) form a disordered region. Positions 1108 to 1119 (PEAAPAPENKPA) are enriched in low complexity. 2 stretches are compositionally biased toward basic and acidic residues: residues 1123 to 1138 (EEIKAKRAARAAEMRQ) and 1153 to 1175 (KKIEDEEKKDESQTPSEKSETVV). The RING-type; atypical zinc finger occupies 1217–1335 (LTCILCQEDE…GEYQCPLCKR (119 aa)). 2 disordered regions span residues 1381–1416 (LSSESVSKKGHSRKRSHSERSLLDLEKLSKDPDTAN) and 1475–1499 (PAATPETIPAIGSSSRIPESQESGK). Residues 1388–1397 (KKGHSRKRSH) show a composition bias toward basic residues. Residues 1398 to 1413 (SERSLLDLEKLSKDPD) show a composition bias toward basic and acidic residues. Polar residues predominate over residues 1486–1495 (GSSSRIPESQ). A helical membrane pass occupies residues 1695–1715 (ILQIDILSLAISLMMTIGWTW).

This sequence belongs to the E3 ubiquitin-protein ligase UBR1-like family. Interacts with ubc-1. Component of a complex containing at least ced-3, ubr-1 and possibly ate-1. Within complex interacts with ced-3 (via the p17 subunit); this interaction is required for the ced-3-mediated cleavage and subsequent degradation of the heterochronic protein lin-28. As to expression, expressed in pharyngeal muscles, body wall muscles and a subset of neurons throughout postembryonic development. Prominently expressed in premotor interneurons, but not expressed in ventral cord motor neurons. Weakly expressed in hypodermal seam cells.

It is found in the membrane. The enzyme catalyses S-ubiquitinyl-[E2 ubiquitin-conjugating enzyme]-L-cysteine + [acceptor protein]-L-lysine = [E2 ubiquitin-conjugating enzyme]-L-cysteine + N(6)-ubiquitinyl-[acceptor protein]-L-lysine.. It participates in protein modification; protein ubiquitination. In terms of biological role, E3 ubiquitin-protein ligase which is a component of the N-end rule pathway. Recognizes and binds to proteins bearing specific N-terminal residues that are destabilizing according to the N-end rule, leading to their ubiquitination and subsequent degradation. In complex with ced-3, required for the ced-3-mediated cleavage and subsequent degradation of the heterochronic protein lin-28 to regulate seam cell fate patterning during larval development. Negatively regulates glutamate metabolism through the aspartate aminotransferase got-1.2. Modulation of glutamate levels most likely controls locomotory behavior, in particular backwards locomotion or 'reversals'. The protein is E3 ubiquitin-protein ligase ubr-1 of Caenorhabditis elegans.